A 232-amino-acid polypeptide reads, in one-letter code: 2,3-bisphosphoglycerate-dependent phosphoglycerate mutase (232 aa).

Substrate is bound by residues 10-17, 23-24, Arg-62, 89-92, Lys-100, 116-117, and 185-186; these read RHGESQWN, TG, ERHY, RR, and GN. His-11 acts as the Tele-phosphohistidine intermediate in catalysis. Residue Glu-89 is the Proton donor/acceptor of the active site.

It belongs to the phosphoglycerate mutase family. BPG-dependent PGAM subfamily. As to quaternary structure, homodimer.

It carries out the reaction (2R)-2-phosphoglycerate = (2R)-3-phosphoglycerate. Its pathway is carbohydrate degradation; glycolysis; pyruvate from D-glyceraldehyde 3-phosphate: step 3/5. Catalyzes the interconversion of 2-phosphoglycerate and 3-phosphoglycerate. In Blochmanniella floridana, this protein is 2,3-bisphosphoglycerate-dependent phosphoglycerate mutase.